The primary structure comprises 178 residues: Ribulose bisphosphate carboxylase small subunit, chloroplastic 1 (178 aa).

The transit peptide at M1–Q54 directs the protein to the chloroplast.

The protein belongs to the RuBisCO small chain family. In terms of assembly, heterohexadecamer of 8 large and 8 small subunits.

The protein resides in the plastid. It localises to the chloroplast. In terms of biological role, ruBisCO catalyzes two reactions: the carboxylation of D-ribulose 1,5-bisphosphate, the primary event in carbon dioxide fixation, as well as the oxidative fragmentation of the pentose substrate. Both reactions occur simultaneously and in competition at the same active site. Although the small subunit is not catalytic it is essential for maximal activity. The polypeptide is Ribulose bisphosphate carboxylase small subunit, chloroplastic 1 (Glycine max (Soybean)).